The sequence spans 212 residues: Synaptosomal-associated protein 25 (212 aa).

2 consecutive t-SNARE coiled-coil homology domains span residues 26-88 and 148-210; these read QGVA…LSGM and DARE…AHQL.

It belongs to the SNAP-25 family. Exclusively found in brain and ganglia.

It is found in the synapse. It localises to the synaptosome. In terms of biological role, may play an important role in the synaptic function of specific neuronal systems. Associates with proteins involved in vesicle docking and membrane fusion. This is Synaptosomal-associated protein 25 (Snap25) from Drosophila melanogaster (Fruit fly).